The primary structure comprises 207 residues: Small ribosomal subunit protein uS4 (207 aa).

Residues 31-55 (KCKLDSKPGQHGRTSGARTSDYGTQ) form a disordered region. Residues 42 to 53 (GRTSGARTSDYG) show a composition bias toward polar residues. The 64-residue stretch at 97-160 (SRLDNVVYRM…KKQARILEAL (64 aa)) folds into the S4 RNA-binding domain.

It belongs to the universal ribosomal protein uS4 family. As to quaternary structure, part of the 30S ribosomal subunit. Contacts protein S5. The interaction surface between S4 and S5 is involved in control of translational fidelity.

Functionally, one of the primary rRNA binding proteins, it binds directly to 16S rRNA where it nucleates assembly of the body of the 30S subunit. With S5 and S12 plays an important role in translational accuracy. This chain is Small ribosomal subunit protein uS4, found in Paraburkholderia phymatum (strain DSM 17167 / CIP 108236 / LMG 21445 / STM815) (Burkholderia phymatum).